The primary structure comprises 327 residues: Malate dehydrogenase (327 aa).

12 to 18 is an NAD(+) binding site; sequence GAAGQIA. Substrate contacts are provided by Arg93 and Arg99. NAD(+) contacts are provided by residues Asn106, Gln113, and 130-132; that span reads VGN. Substrate contacts are provided by Asn132 and Arg163. Residue His188 is the Proton acceptor of the active site.

Belongs to the LDH/MDH superfamily. MDH type 2 family.

The enzyme catalyses (S)-malate + NAD(+) = oxaloacetate + NADH + H(+). Functionally, catalyzes the reversible oxidation of malate to oxaloacetate. The protein is Malate dehydrogenase of Acidiphilium cryptum (strain JF-5).